Reading from the N-terminus, the 167-residue chain is Epithelial membrane protein 2 (167 aa).

Residues Met-1–Ile-21 traverse the membrane as a helical segment. N-linked (GlcNAc...) asparagine glycosylation is found at Asn-44, Asn-47, and Asn-52. The next 3 membrane-spanning stretches (helical) occupy residues Thr-67–Phe-87, Phe-95–Ile-115, and Tyr-143–Leu-163.

The protein belongs to the PMP-22/EMP/MP20 family. Interacts with PTK2; regulates PTK2 activation and localization. Interacts with ITGB3; regulates the levels of the heterodimer ITGA5-ITGB3 integrin surface expression. Interacts with P2RX7 (via C-terminus). Interacts with ITGB1; the interaction may be direct or indirect and ITGB1 has a heterodimer form.

The protein localises to the golgi apparatus membrane. It is found in the cell membrane. The protein resides in the apical cell membrane. It localises to the membrane raft. Its subcellular location is the cytoplasm. The protein localises to the nucleus. It is found in the perinuclear region. Its function is as follows. Functions as a key regulator of cell membrane composition by regulating protein surface expression. Also, plays a role in regulation of processes including cell migration, cell proliferation, cell contraction and cell adhesion. Regulates transepithelial migration of neutrophils into the alveolar lumen, potentially via mediation of cell surface expression of adhesion markers and lipid raft formation. Negatively regulates caveolae formation by reducing CAV1 expression and CAV1 amount by increasing lysosomal degradation. Facilitates surface trafficking and the formation of lipid rafts bearing GPI-anchor proteins. Regulates surface expression of MHC1 and ICAM1 proteins increasing susceptibility to T-cell mediated cytotoxicity. Regulates the plasma membrane expression of the integrin heterodimers ITGA6-ITGB1, ITGA5-ITGB3 and ITGA5-ITGB1 resulting in modulation of cell-matrix adhesion. Also regulates many processes through PTK2. Regulates blood vessel endothelial cell migration and angiogenesis by regulating VEGF protein expression through PTK2 activation. Regulates cell migration and cell contraction through PTK2 and SRC activation. Regulates focal adhesion density, F-actin conformation and cell adhesion capacity through interaction with PTK2. Positively regulates cell proliferation. Plays a role during cell death and cell blebbing. Promotes angiogenesis and vasculogenesis through induction of VEGFA via a HIF1A-dependent pathway. Also plays a role in embryo implantation by regulating surface trafficking of integrin heterodimer ITGA5-ITGB3. Plays a role in placental angiogenesis and uterine natural killer cell regulation at the maternal-fetal placental interface, however not required in the maternal tissues for a viable pregnancy. Involved in the early stages of embryogenic development and cardiogenesis, potentially via regulation of epithelial-mesenchymal transition timing. May play a role in glomerular filtration. This chain is Epithelial membrane protein 2 (EMP2), found in Pan troglodytes (Chimpanzee).